The primary structure comprises 191 residues: Protein GrpE (191 aa).

The protein belongs to the GrpE family. As to quaternary structure, homodimer.

It localises to the cytoplasm. Its function is as follows. Participates actively in the response to hyperosmotic and heat shock by preventing the aggregation of stress-denatured proteins, in association with DnaK and GrpE. It is the nucleotide exchange factor for DnaK and may function as a thermosensor. Unfolded proteins bind initially to DnaJ; upon interaction with the DnaJ-bound protein, DnaK hydrolyzes its bound ATP, resulting in the formation of a stable complex. GrpE releases ADP from DnaK; ATP binding to DnaK triggers the release of the substrate protein, thus completing the reaction cycle. Several rounds of ATP-dependent interactions between DnaJ, DnaK and GrpE are required for fully efficient folding. In Listeria monocytogenes serotype 1/2a (strain 10403S), this protein is Protein GrpE.